Consider the following 113-residue polypeptide: TYRO protein tyrosine kinase-binding protein (113 aa).

The first 27 residues, 1-27 (MGGLEPCSRLLLLPLLLAVGGLRPVQA), serve as a signal peptide directing secretion. The Extracellular segment spans residues 28–40 (QAQSDCSCSTVSP). A helical transmembrane segment spans residues 41 to 61 (GVLAGIVLGDLVLTVLIALAV). Asp50 is a Ca(2+) binding site. Residues 62–113 (YFLGRLVPRGRGAAEAATRKQRITETESPYQELQGQRSDVYSDLNTQRPYYK) are Cytoplasmic-facing. Residues 75–113 (AEAATRKQRITETESPYQELQGQRSDVYSDLNTQRPYYK) form a disordered region. The 29-residue stretch at 80–108 (RKQRITETESPYQELQGQRSDVYSDLNTQ) folds into the ITAM domain. Positions 87–113 (TESPYQELQGQRSDVYSDLNTQRPYYK) are enriched in polar residues. A phosphotyrosine mark is found at Tyr91 and Tyr102.

The protein belongs to the TYROBP family. As to quaternary structure, homodimer; disulfide-linked. Homotrimer; disulfide-linked. Homotetramer; disulfide-linked. Homotrimers and homotetramers form when low levels of partner receptors are available and is competitive with assembly with interacting receptors. They may represent alternative oligomerization states or may be intermediates in the receptor assembly process. Binding of a metal cation aids in homooligomerization through coordination of the metal ion by the subunits of the oligomer. Interacts with TREM1. Interacts with TREM2. Interacts with CLECSF5. Interacts with CD300LB and CD300C2. Interacts with CD300E. Interacts (via ITAM domain) with SYK (via SH2 domains); activates SYK mediating neutrophils and macrophages integrin-mediated activation. Interacts with KLRC2. Interacts with CD300H. Interacts with KLRD1. Following ligand binding by associated receptors, tyrosine phosphorylated in the ITAM domain which leads to activation of additional tyrosine kinases and subsequent cell activation.

It is found in the cell membrane. Functionally, adapter protein which non-covalently associates with activating receptors found on the surface of a variety of immune cells to mediate signaling and cell activation following ligand binding by the receptors. TYROBP is tyrosine-phosphorylated in the ITAM domain following ligand binding by the associated receptors which leads to activation of additional tyrosine kinases and subsequent cell activation. Also has an inhibitory role in some cells. Non-covalently associates with activating receptors of the CD300 family to mediate cell activation. Also mediates cell activation through association with activating receptors of the CD200R family. Required for neutrophil activation mediated by integrin. Required for the activation of myeloid cells mediated by the CLEC5A/MDL1 receptor. Associates with natural killer (NK) cell receptors such as the KLRD1/KLRC2 heterodimer to mediate NK cell activation. Associates with TREM1 to mediate activation of neutrophils and monocytes. Associates with TREM2 on monocyte-derived dendritic cells to mediate up-regulation of chemokine receptor CCR7 and dendritic cell maturation and survival. Association with TREM2 mediates cytokine-induced formation of multinucleated giant cells which are formed by the fusion of macrophages. Stabilizes the TREM2 C-terminal fragment (TREM2-CTF) produced by TREM2 ectodomain shedding which suppresses the release of pro-inflammatory cytokines. In microglia, required with TREM2 for phagocytosis of apoptotic neurons. Required with ITGAM/CD11B in microglia to control production of microglial superoxide ions which promote the neuronal apoptosis that occurs during brain development. Promotes pro-inflammatory responses in microglia following nerve injury which accelerates degeneration of injured neurons. Positively regulates the expression of the IRAK3/IRAK-M kinase and IL10 production by liver dendritic cells and inhibits their T cell allosimulatory ability. Negatively regulates B cell proliferation. Required for CSF1-mediated osteoclast cytoskeletal organization. Positively regulates multinucleation during osteoclast development. In Macaca mulatta (Rhesus macaque), this protein is TYRO protein tyrosine kinase-binding protein.